Consider the following 1082-residue polypeptide: Sodium/potassium exporting P-type ATPase 2 (1082 aa).

The Cytoplasmic portion of the chain corresponds to 1–75; sequence MSSINTNVAE…GANTLGDGDK (75 aa). The helical transmembrane segment at 76 to 96 threads the bilayer; it reads ISLTKIIAHQVCNAMILVLII. Residues 97-98 are Extracellular-facing; it reads SM. The chain crosses the membrane as a helical span at residues 99 to 119; it reads VIALAIKDWISGGVIGFVVLI. Over 120-308 the chain is Cytoplasmic; the sequence is NISVGFVQEY…VGTPLQRKLS (189 aa). The helical transmembrane segment at 309-329 threads the bilayer; the sequence is WLAIFLFWGCRYFCNYCNGIP. Residues 330–336 are Extracellular-facing; that stretch reads KNRVNKE. A helical membrane pass occupies residues 337-357; it reads VAIYAICVALSMIPSALIVVL. Over 358 to 807 the chain is Cytoplasmic; it reads TITMAVGAQV…RMSSNIQKFV (450 aa). D393 (4-aspartylphosphate intermediate) is an active-site residue. Residues D393 and T395 each coordinate Mg(2+). 9 residues coordinate ATP: T395, E499, K552, R604, T664, G665, D666, R723, and K729. D748 contributes to the Mg(2+) binding site. N751 contributes to the ATP binding site. A helical transmembrane segment spans residues 808 to 828; that stretch reads LQLLAENVAQALYLMVGLAFI. Residues 829 to 832 lie on the Extracellular side of the membrane; sequence DDSG. A helical transmembrane segment spans residues 833–853; the sequence is LSVFPLSPVEVLWILVVTSCF. The Cytoplasmic portion of the chain corresponds to 854 to 884; the sequence is PAMDLGQERASDDILEESPNSTIFTWEVIID. The chain crosses the membrane as a helical span at residues 885–905; sequence MIVYGFWMAVCCLVCFVIIVY. The Extracellular portion of the chain corresponds to 906 to 935; sequence GEGDPYLGVNCNKSSSSNSDVCELVFRGRS. Residues 936–956 traverse the membrane as a helical segment; sequence ASFATMTWCALILAWECIHPY. At 957 to 983 the chain is on the cytoplasmic side; sequence NSLFYMRQDTDHPWWKQTVIDLWDNQF. The helical transmembrane segment at 984–1004 threads the bilayer; sequence LFWSVAIGFISVFPVVYIPVI. Residues 1005–1007 lie on the Extracellular side of the membrane; that stretch reads NTK. Residues 1008–1028 traverse the membrane as a helical segment; that stretch reads VFLHGPIGYEWGLAVGFSILF. At 1029–1082 the chain is on the cytoplasmic side; sequence LAGSELWKWIKRIHKRKANKKAKNPEYELERSDPFKKYASFSRSNTMDRPELMV.

This sequence belongs to the cation transport ATPase (P-type) (TC 3.A.3) family. Type IID subfamily. Requires Mg(2+) as cofactor. The active site is phosphorylated in presence of sodium or potassium and in conditions of higher pH. Not phosphorylated in presence of calcium ions.

The protein resides in the cell membrane. It catalyses the reaction Na(+)(in) + ATP + H2O = Na(+)(out) + ADP + phosphate + H(+). It carries out the reaction K(+)(in) + ATP + H2O = K(+)(out) + ADP + phosphate + H(+). Functionally, catalyzes the hydrolysis of ATP coupled with the export of sodium and potassium from the cell. May be an inefficient sodium exporter. May transport other cations such as lithium. Sodium/potassium efflux ATPases are involved in salt tolerance and maintaining the membrane potential across the plasma membrane in high salinity (Na+) or alkaline (K+) environments. The polypeptide is Sodium/potassium exporting P-type ATPase 2 (Schwanniomyces occidentalis (Yeast)).